We begin with the raw amino-acid sequence, 628 residues long: tRNA uridine 5-carboxymethylaminomethyl modification enzyme MnmG (628 aa).

13 to 18 (GAGHAG) is a binding site for FAD. 281–295 (GARYCPSIEDKIKKF) contacts NAD(+).

It belongs to the MnmG family. In terms of assembly, homodimer. Heterotetramer of two MnmE and two MnmG subunits. FAD serves as cofactor.

The protein localises to the cytoplasm. NAD-binding protein involved in the addition of a carboxymethylaminomethyl (cmnm) group at the wobble position (U34) of certain tRNAs, forming tRNA-cmnm(5)s(2)U34. This Treponema denticola (strain ATCC 35405 / DSM 14222 / CIP 103919 / JCM 8153 / KCTC 15104) protein is tRNA uridine 5-carboxymethylaminomethyl modification enzyme MnmG.